Here is a 282-residue protein sequence, read N- to C-terminus: Gap junction Cx32.7 protein (282 aa).

Residues 2–13 (GEWDLLGRLLDK) lie on the Cytoplasmic side of the membrane. A helical transmembrane segment spans residues 14 to 36 (VQSHSTVIGKVWLTVLFVFRILV). At 37 to 76 (LRTGADRVWGDEQSDFVCNTQQPGCENVCYDLAFPISHVR) the chain is on the extracellular side. A helical transmembrane segment spans residues 77–99 (FWFLQIIAVATPKLLYLGHVLHV). At 100 to 148 (IHAEKKMKERMKKQAELDDQTNLFLRKAYKVPKYTKSSGKISIRGRLLR) the chain is on the cytoplasmic side. Residues 149-171 (SYVYHLVAKIILEVLFIVGQYFL) form a helical membrane-spanning segment. Topologically, residues 172-203 (YGFTLDTRYVCTRFPCPHKVDCFLSRPTEKSV) are extracellular. A helical transmembrane segment spans residues 204–226 (IIWFMLVAAFVSLFLSLVELFYL). Residues 227-282 (CVKAAKECMARRQDYTVTPVTPPLLARKSFKSHKEVFQNCVNEPASPENNMEEVHI) are Cytoplasmic-facing.

The protein belongs to the connexin family. Alpha-type (group II) subfamily. A connexon is composed of a hexamer of connexins. Expressed equally in incompetent and competent ovaries.

The protein resides in the cell membrane. It localises to the cell junction. The protein localises to the gap junction. Functionally, one gap junction consists of a cluster of closely packed pairs of transmembrane channels, the connexons, through which materials of low MW diffuse from one cell to a neighboring cell. The sequence is that of Gap junction Cx32.7 protein from Micropogonias undulatus (Atlantic croaker).